We begin with the raw amino-acid sequence, 263 residues long: Type II restriction enzyme TaqI (263 aa).

In terms of processing, only 15% of purified enzyme (upon expression in E.coli) can be sequenced, suggesting the remainder has a blocked N-terminus.

It catalyses the reaction Endonucleolytic cleavage of DNA to give specific double-stranded fragments with terminal 5'-phosphates.. Its function is as follows. A P subtype restriction enzyme that recognizes the double-stranded sequence 5'-TCGA-3' and cleaves after T-1. This chain is Type II restriction enzyme TaqI (taqIR), found in Thermus aquaticus.